Consider the following 1292-residue polypeptide: Myosin-1 (1292 aa).

The Myosin motor domain maps to 35–714; sequence VGVSDLTLLS…TLFALENMRD (680 aa). 128–135 contributes to the ATP binding site; sequence GESGAGKT. Ser356 is modified (phosphoserine). The interval 403–485 is actin-binding; the sequence is SIGILDIYGF…PGIFAALNDS (83 aa). 2 IQ domains span residues 718–738 and 739–764; these read HNMASRIQRAWRRFLQRRIDS and AIRIQRAIREMKHGNQFEQLRDYGNK. In terms of domain architecture, TH1 spans 770–960; the sequence is KERRAMSLLG…TIMVRRGRPG (191 aa). Disordered regions lie at residues 956 to 991, 1017 to 1180, and 1227 to 1258; these read RGRPGNCSQRKKPLSTRLPDTYTTRETGYKNAGHPT, YSLN…FPLK, and PVASSAPLGNSGVATREAGTTSAATAAASAAT. The segment covering 1062 to 1081 has biased composition (polar residues); sequence MDNSSAAYGNASALPNSAPS. 2 stretches are compositionally biased toward pro residues: residues 1087–1121 and 1142–1155; these read ASRPVPKPAPRPGPKPGPKPGPKPGPKPAPKPMPR and APPPPPPPPPPPAA. The SH3 domain occupies 1157–1219; the sequence is PSEPVYEAAF…PTAYIVESKA (63 aa). The segment covering 1240-1258 has biased composition (low complexity); sequence ATREAGTTSAATAAASAAT.

The protein belongs to the TRAFAC class myosin-kinesin ATPase superfamily. Myosin family. Post-translationally, phosphorylation of the TEDS site (Ser-356) is required for the polarization of the actin cytoskeleton. Phosphorylation probably activates the myosin-I ATPase activity.

It is found in the cytoplasm. The protein localises to the cytoskeleton. The protein resides in the actin patch. In terms of biological role, type-I myosin implicated in the organization of the actin cytoskeleton. Required for proper actin cytoskeleton polarization. At the cell cortex, assembles in patch-like structures together with proteins from the actin-polymerizing machinery and promotes actin assembly. Functions as actin nucleation-promoting factor (NPF) for the Arp2/3 complex. This is Myosin-1 (MYO1) from Eremothecium gossypii (strain ATCC 10895 / CBS 109.51 / FGSC 9923 / NRRL Y-1056) (Yeast).